A 324-amino-acid polypeptide reads, in one-letter code: Phospho-N-acetylmuramoyl-pentapeptide-transferase (324 aa).

10 consecutive transmembrane segments (helical) span residues 5–25 (VILF…PILI), 50–70 (GTPT…AIVM), 77–97 (LSAE…LGFL), 117–137 (LIGQ…CHFS), 147–167 (LSID…VGGS), 176–196 (LDGL…ILAW), 203–223 (VAIF…FNAH), 227–247 (VFMG…VAIL), 250–270 (LEIL…SVIL), and 302–322 (VVVT…YIEV).

Belongs to the glycosyltransferase 4 family. MraY subfamily. Mg(2+) is required as a cofactor.

Its subcellular location is the cell membrane. The enzyme catalyses UDP-N-acetyl-alpha-D-muramoyl-L-alanyl-gamma-D-glutamyl-meso-2,6-diaminopimeloyl-D-alanyl-D-alanine + di-trans,octa-cis-undecaprenyl phosphate = di-trans,octa-cis-undecaprenyl diphospho-N-acetyl-alpha-D-muramoyl-L-alanyl-D-glutamyl-meso-2,6-diaminopimeloyl-D-alanyl-D-alanine + UMP. It participates in cell wall biogenesis; peptidoglycan biosynthesis. Functionally, catalyzes the initial step of the lipid cycle reactions in the biosynthesis of the cell wall peptidoglycan: transfers peptidoglycan precursor phospho-MurNAc-pentapeptide from UDP-MurNAc-pentapeptide onto the lipid carrier undecaprenyl phosphate, yielding undecaprenyl-pyrophosphoryl-MurNAc-pentapeptide, known as lipid I. The sequence is that of Phospho-N-acetylmuramoyl-pentapeptide-transferase from Bacillus velezensis (strain DSM 23117 / BGSC 10A6 / LMG 26770 / FZB42) (Bacillus amyloliquefaciens subsp. plantarum).